A 57-amino-acid chain; its full sequence is Temporin-ALk (57 aa).

Residues 1 to 22 (MFTLKKSLLLLFFLGTINLSLC) form the signal peptide. The propeptide occupies 23 to 46 (EQERNAEEERRDDLGERQAEVEKR). Ser-56 bears the Serine amide mark.

The protein belongs to the frog skin active peptide (FSAP) family. Temporin subfamily. As to expression, expressed by the skin glands.

It localises to the secreted. Functionally, antimicrobial peptide with weak activity against Gram-positive and Gram-negative bacteria and against fungi. Has been tested against S.aureus (MIC=15.0 ug/mL), B.pumilus (no activity detected), B.cereus (no activity detected), E.coli (MIC=30.0 ug/mL), B.dysenteriae (MIC=60.0 ug/mL), A.cacoaceticus (MIC=75.0 ug/mL), P.aeruginosa (MIC=25.0 ug/mL) and C.albicans (MIC=15.0 ug/mL). Also shows a weak hemolytic activity. The chain is Temporin-ALk from Amolops loloensis (Lolokou Sucker Frog).